A 261-amino-acid chain; its full sequence is Imidazole glycerol phosphate synthase subunit HisF (261 aa).

Catalysis depends on residues Asp-12 and Asp-131.

It belongs to the HisA/HisF family. Heterodimer of HisH and HisF.

The protein localises to the cytoplasm. It carries out the reaction 5-[(5-phospho-1-deoxy-D-ribulos-1-ylimino)methylamino]-1-(5-phospho-beta-D-ribosyl)imidazole-4-carboxamide + L-glutamine = D-erythro-1-(imidazol-4-yl)glycerol 3-phosphate + 5-amino-1-(5-phospho-beta-D-ribosyl)imidazole-4-carboxamide + L-glutamate + H(+). It functions in the pathway amino-acid biosynthesis; L-histidine biosynthesis; L-histidine from 5-phospho-alpha-D-ribose 1-diphosphate: step 5/9. IGPS catalyzes the conversion of PRFAR and glutamine to IGP, AICAR and glutamate. The HisF subunit catalyzes the cyclization activity that produces IGP and AICAR from PRFAR using the ammonia provided by the HisH subunit. The sequence is that of Imidazole glycerol phosphate synthase subunit HisF from Brucella anthropi (strain ATCC 49188 / DSM 6882 / CCUG 24695 / JCM 21032 / LMG 3331 / NBRC 15819 / NCTC 12168 / Alc 37) (Ochrobactrum anthropi).